The primary structure comprises 144 residues: Transcriptional regulator SlyA (144 aa).

Residues 2–135 (ESPLGSDLAR…LLHLIRKLEQ (134 aa)) enclose the HTH marR-type domain. Residues 49–72 (QIQLAKAIGIEQPSLVRTLDQLEE) constitute a DNA-binding region (H-T-H motif).

It belongs to the SlyA family. Homodimer.

In terms of biological role, transcription regulator that can specifically activate or repress expression of target genes. This Klebsiella pneumoniae (strain 342) protein is Transcriptional regulator SlyA.